A 276-amino-acid chain; its full sequence is 2-dehydro-3-deoxyphosphooctonate aldolase (276 aa).

This sequence belongs to the KdsA family.

The protein resides in the cytoplasm. It carries out the reaction D-arabinose 5-phosphate + phosphoenolpyruvate + H2O = 3-deoxy-alpha-D-manno-2-octulosonate-8-phosphate + phosphate. Its pathway is carbohydrate biosynthesis; 3-deoxy-D-manno-octulosonate biosynthesis; 3-deoxy-D-manno-octulosonate from D-ribulose 5-phosphate: step 2/3. The protein is 2-dehydro-3-deoxyphosphooctonate aldolase of Stenotrophomonas maltophilia (strain K279a).